We begin with the raw amino-acid sequence, 196 residues long: MEFIYPQASLIAGVDEVGRGPLVGAVVTAAVILDPLQPIVGLADSKKLSEKRREALYLEITEKALCWSLGRAEPAEIDQLNILHATMLAMQRAVANLPISPEYVLIDGNRCPKLPMPAQAVIKGDGLVAEISAASIVAKVTRDREMAELDQLFPEYGFAKHKGYPTAFHLEKLVQLGATEHHRKSFAPVKRAIGLK.

Residues 9–196 enclose the RNase H type-2 domain; that stretch reads SLIAGVDEVG…APVKRAIGLK (188 aa). A divalent metal cation-binding residues include Asp-15, Glu-16, and Asp-107.

It belongs to the RNase HII family. It depends on Mn(2+) as a cofactor. Mg(2+) serves as cofactor.

Its subcellular location is the cytoplasm. The enzyme catalyses Endonucleolytic cleavage to 5'-phosphomonoester.. Functionally, endonuclease that specifically degrades the RNA of RNA-DNA hybrids. The sequence is that of Ribonuclease HII from Photorhabdus laumondii subsp. laumondii (strain DSM 15139 / CIP 105565 / TT01) (Photorhabdus luminescens subsp. laumondii).